The chain runs to 932 residues: DNA mismatch repair protein MutS (932 aa).

Residue G615–S622 coordinates ATP.

Belongs to the DNA mismatch repair MutS family.

In terms of biological role, this protein is involved in the repair of mismatches in DNA. It is possible that it carries out the mismatch recognition step. This protein has a weak ATPase activity. The sequence is that of DNA mismatch repair protein MutS from Clostridium botulinum (strain Okra / Type B1).